Reading from the N-terminus, the 91-residue chain is Small ribosomal subunit protein uS19 (91 aa).

This sequence belongs to the universal ribosomal protein uS19 family.

Protein S19 forms a complex with S13 that binds strongly to the 16S ribosomal RNA. This is Small ribosomal subunit protein uS19 from Pseudomonas putida (strain ATCC 700007 / DSM 6899 / JCM 31910 / BCRC 17059 / LMG 24140 / F1).